The sequence spans 544 residues: Elongator complex protein 3 (544 aa).

In terms of domain architecture, Radical SAM core spans R79–P369. Residues C96, C106, and C109 each coordinate [4Fe-4S] cluster. Residues K161, E472–V475, F495–T497, and Y528 each bind acetyl-CoA. The N-acetyltransferase domain maps to T393–L544.

This sequence belongs to the ELP3 family. As to quaternary structure, component of the elongator complex. It depends on [4Fe-4S] cluster as a cofactor.

The protein resides in the cytoplasm. The catalysed reaction is uridine(34) in tRNA + acetyl-CoA + S-adenosyl-L-methionine + H2O = 5-(carboxymethyl)uridine(34) in tRNA + 5'-deoxyadenosine + L-methionine + CoA + 2 H(+). It functions in the pathway tRNA modification; 5-methoxycarbonylmethyl-2-thiouridine-tRNA biosynthesis. Functionally, catalytic tRNA acetyltransferase subunit of the elongator complex which is required for multiple tRNA modifications, including mcm5U (5-methoxycarbonylmethyl uridine), mcm5s2U (5-methoxycarbonylmethyl-2-thiouridine), and ncm5U (5-carbamoylmethyl uridine). In the elongator complex, acts as a tRNA uridine(34) acetyltransferase, which mediates formation of carboxymethyluridine in the wobble base at position 34 in tRNAs. This chain is Elongator complex protein 3, found in Schizosaccharomyces pombe (strain 972 / ATCC 24843) (Fission yeast).